Here is an 82-residue protein sequence, read N- to C-terminus: Penaeidin-3f (82 aa).

The signal sequence occupies residues 1-19; sequence MRLVACLVFLASFALVCQG. Residue glutamine 20 is modified to Pyrrolidone carboxylic acid. Cystine bridges form between cysteine 51-cysteine 66, cysteine 55-cysteine 73, and cysteine 67-cysteine 74. Serine 81 is subject to Serine amide.

It belongs to the penaeidin family.

Its subcellular location is the cytoplasmic granule. In terms of biological role, antibacterial and antifungal activity. Presents chitin-binding activity. The chain is Penaeidin-3f from Penaeus vannamei (Whiteleg shrimp).